We begin with the raw amino-acid sequence, 383 residues long: MKMNLPPFIELYRALIATPSISATDSALDQSNHTLINLLAGWFGDIGFHVEVQPVPGTLNKFNMLARIGEGKGGLLLAGHTDTVPFDDGRWTRDPFTLTEHDNKLYGLGTADMKGFFAFILDALRDIDPTKLTKPLYVLATADEETTMAGAKYFSESTQIRPDCAIIGEPTSLQPVRAHKGHMSNAIRIQGQSGHSSDPSRGVNAIELMHEAISHLLVLRNTLQERYHNPIFHIPYPTMNLGHIHGGDAANRICGCCELHMDIRPLPGITLNDLDGLLSEALAPVSQRWPGRLTISELHPPIPGYECPPDHRLISVVENLLGTKTEIVNYCTEAPFIQTLCPTLVLGPGSIEQAHQPDEYIDTAFIKPTRELISQVIHHFCHH.

His80 is a Zn(2+) binding site. Residue Asp82 is part of the active site. Asp112 provides a ligand contact to Zn(2+). The active site involves Glu144. 3 residues coordinate Zn(2+): Glu145, Glu169, and His355.

This sequence belongs to the peptidase M20A family. ArgE subfamily. As to quaternary structure, homodimer. It depends on Zn(2+) as a cofactor. The cofactor is Co(2+). Glutathione serves as cofactor.

Its subcellular location is the cytoplasm. The catalysed reaction is N(2)-acetyl-L-ornithine + H2O = L-ornithine + acetate. It functions in the pathway amino-acid biosynthesis; L-arginine biosynthesis; L-ornithine from N(2)-acetyl-L-ornithine (linear): step 1/1. Functionally, catalyzes the hydrolysis of the amide bond of N(2)-acetylated L-amino acids. Cleaves the acetyl group from N-acetyl-L-ornithine to form L-ornithine, an intermediate in L-arginine biosynthesis pathway, and a branchpoint in the synthesis of polyamines. The chain is Acetylornithine deacetylase from Pectobacterium atrosepticum (strain SCRI 1043 / ATCC BAA-672) (Erwinia carotovora subsp. atroseptica).